A 237-amino-acid polypeptide reads, in one-letter code: Ribosomal RNA small subunit methyltransferase G (237 aa).

Residues Gly-78, Phe-83, 129-130 (AE), and Arg-148 contribute to the S-adenosyl-L-methionine site.

Belongs to the methyltransferase superfamily. RNA methyltransferase RsmG family.

Its subcellular location is the cytoplasm. Its function is as follows. Specifically methylates the N7 position of a guanine in 16S rRNA. This Streptococcus pyogenes serotype M12 (strain MGAS9429) protein is Ribosomal RNA small subunit methyltransferase G.